Here is a 97-residue protein sequence, read N- to C-terminus: MTDLRHYDVIVSPAITEKSTLLSDNNQVVFNVAKTATKPEIKAAVEALFGVKVTAVNTLLRLGKTKRFKGLVGKQKDVKKAIVTLAEGQSIDVSTGL.

Belongs to the universal ribosomal protein uL23 family. As to quaternary structure, part of the 50S ribosomal subunit. Contacts protein L29, and trigger factor when it is bound to the ribosome.

One of the early assembly proteins it binds 23S rRNA. One of the proteins that surrounds the polypeptide exit tunnel on the outside of the ribosome. Forms the main docking site for trigger factor binding to the ribosome. The polypeptide is Large ribosomal subunit protein uL23 (Rhizobium rhizogenes (strain K84 / ATCC BAA-868) (Agrobacterium radiobacter)).